A 275-amino-acid chain; its full sequence is 2,3,4,5-tetrahydropyridine-2,6-dicarboxylate N-succinyltransferase (275 aa).

This sequence belongs to the transferase hexapeptide repeat family.

The protein localises to the cytoplasm. The catalysed reaction is (S)-2,3,4,5-tetrahydrodipicolinate + succinyl-CoA + H2O = (S)-2-succinylamino-6-oxoheptanedioate + CoA. It functions in the pathway amino-acid biosynthesis; L-lysine biosynthesis via DAP pathway; LL-2,6-diaminopimelate from (S)-tetrahydrodipicolinate (succinylase route): step 1/3. The protein is 2,3,4,5-tetrahydropyridine-2,6-dicarboxylate N-succinyltransferase of Burkholderia ambifaria (strain MC40-6).